The chain runs to 241 residues: Large ribosomal subunit protein uL3 (241 aa).

The interval 140-168 (SHRSIGSTGGRQDPGKTFKNKKMPGHMGD) is disordered. At glutamine 151 the chain carries N5-methylglutamine.

The protein belongs to the universal ribosomal protein uL3 family. Part of the 50S ribosomal subunit. Forms a cluster with proteins L14 and L19. In terms of processing, methylated by PrmB.

Functionally, one of the primary rRNA binding proteins, it binds directly near the 3'-end of the 23S rRNA, where it nucleates assembly of the 50S subunit. This Azorhizobium caulinodans (strain ATCC 43989 / DSM 5975 / JCM 20966 / LMG 6465 / NBRC 14845 / NCIMB 13405 / ORS 571) protein is Large ribosomal subunit protein uL3.